A 295-amino-acid chain; its full sequence is MTWQIVFVVICVIVAGVAALFWRLPSDDTTRSRAKTVTIAAVAAAAVFFFLGCFTIVGTRQFAIMTTFGRPTGVSLNNGFHGKWPWQMTHPMDGAVQIDKYVKEGNTDQRITVRLGNQSTALADVSIRWQLKQAAAPELFQQYKTFDNVRVNLIERNLSVALNEVFAGFNPLDPRNLDVSPLPSLAKRAADILRQDVGGQVDIFDVNVPTIQYDQSTEDKINQLNQQRAQTSIALEAQRTAEAQAKANEILSRSISDDPNVVVQNCITAAINKGISPLGCWPGSSALPTIAVPGR.

2 helical membrane passes run Thr-2–Trp-22 and Val-37–Val-57.

It localises to the cell membrane. The protein resides in the secreted. The protein localises to the cell wall. In terms of biological role, protease that triggers late cell apoptosis and contributes to the pathogenicity and dissemination of M.tuberculosis. In a mouse model of infection, can induce hepatocyte and lung cell apoptosis and cause pathological damage to the spleen, liver and lungs. Specifically stimulates the secretion of inflammatory cytokines including TNF-alpha, IL-6 and IL-1 beta. Can degrade casein in vitro. In Mycobacterium tuberculosis (strain ATCC 25618 / H37Rv), this protein is Protease Rv3090.